A 301-amino-acid chain; its full sequence is Indole-3-glycerol phosphate synthase (301 aa).

Belongs to the TrpC family.

It catalyses the reaction 1-(2-carboxyphenylamino)-1-deoxy-D-ribulose 5-phosphate + H(+) = (1S,2R)-1-C-(indol-3-yl)glycerol 3-phosphate + CO2 + H2O. Its pathway is amino-acid biosynthesis; L-tryptophan biosynthesis; L-tryptophan from chorismate: step 4/5. In Prochlorococcus marinus (strain MIT 9313), this protein is Indole-3-glycerol phosphate synthase.